We begin with the raw amino-acid sequence, 397 residues long: Torsin-3A (397 aa).

Residues 1–25 (MLRGPWRQLWLFFLLLLPGAPEPRG) form the signal peptide. N122 carries N-linked (GlcNAc...) asparagine glycosylation. 167-174 (GWSGTGKN) contacts ATP.

This sequence belongs to the ClpA/ClpB family. Torsin subfamily. In terms of assembly, may not form homohexamers. Post-translationally, N-glycosylated. Ubiquitously expressed. Highest expression in stomach, salivary glands and lymph nodes. Isoform 2 is expressed in placenta.

Its subcellular location is the cytoplasm. It localises to the endoplasmic reticulum lumen. The chain is Torsin-3A (TOR3A) from Homo sapiens (Human).